Consider the following 250-residue polypeptide: Ribosomal RNA small subunit methyltransferase J (250 aa).

S-adenosyl-L-methionine contacts are provided by residues 96 to 97 and aspartate 168; that span reads RD.

The protein belongs to the methyltransferase superfamily. RsmJ family.

The protein resides in the cytoplasm. It carries out the reaction guanosine(1516) in 16S rRNA + S-adenosyl-L-methionine = N(2)-methylguanosine(1516) in 16S rRNA + S-adenosyl-L-homocysteine + H(+). Specifically methylates the guanosine in position 1516 of 16S rRNA. The chain is Ribosomal RNA small subunit methyltransferase J from Neisseria meningitidis serogroup C / serotype 2a (strain ATCC 700532 / DSM 15464 / FAM18).